A 100-amino-acid polypeptide reads, in one-letter code: MELTPREKDKLLIFTAALLAERRRARGLKLNYPETVALITAALMEGARDGKTVAELMSEGTRILGRDEVMEGVPEMISNIQVEVTFPDGTKLITVHNPVV.

The protein belongs to the urease gamma subunit family. In terms of assembly, heterotrimer of UreA (gamma), UreB (beta) and UreC (alpha) subunits. Three heterotrimers associate to form the active enzyme.

The protein localises to the cytoplasm. It catalyses the reaction urea + 2 H2O + H(+) = hydrogencarbonate + 2 NH4(+). It functions in the pathway nitrogen metabolism; urea degradation; CO(2) and NH(3) from urea (urease route): step 1/1. The protein is Urease subunit gamma of Bordetella bronchiseptica (strain ATCC BAA-588 / NCTC 13252 / RB50) (Alcaligenes bronchisepticus).